A 228-amino-acid chain; its full sequence is UPF0173 metal-dependent hydrolase BLi03080/BL00413 (228 aa).

It belongs to the UPF0173 family.

This chain is UPF0173 metal-dependent hydrolase BLi03080/BL00413, found in Bacillus licheniformis (strain ATCC 14580 / DSM 13 / JCM 2505 / CCUG 7422 / NBRC 12200 / NCIMB 9375 / NCTC 10341 / NRRL NRS-1264 / Gibson 46).